Reading from the N-terminus, the 317-residue chain is 4-hydroxy-3-methylbut-2-enyl diphosphate reductase (317 aa).

A [4Fe-4S] cluster-binding site is contributed by cysteine 12. (2E)-4-hydroxy-3-methylbut-2-enyl diphosphate contacts are provided by histidine 43 and histidine 81. Residues histidine 43 and histidine 81 each coordinate dimethylallyl diphosphate. Residues histidine 43 and histidine 81 each coordinate isopentenyl diphosphate. [4Fe-4S] cluster is bound at residue cysteine 103. Histidine 131 contributes to the (2E)-4-hydroxy-3-methylbut-2-enyl diphosphate binding site. Residue histidine 131 coordinates dimethylallyl diphosphate. Residue histidine 131 coordinates isopentenyl diphosphate. The active-site Proton donor is the glutamate 133. Threonine 172 contacts (2E)-4-hydroxy-3-methylbut-2-enyl diphosphate. A [4Fe-4S] cluster-binding site is contributed by cysteine 200. (2E)-4-hydroxy-3-methylbut-2-enyl diphosphate is bound by residues serine 228, asparagine 230, and serine 273. Residues serine 228, asparagine 230, and serine 273 each contribute to the dimethylallyl diphosphate site. Isopentenyl diphosphate contacts are provided by serine 228, asparagine 230, and serine 273.

This sequence belongs to the IspH family. The cofactor is [4Fe-4S] cluster.

It carries out the reaction isopentenyl diphosphate + 2 oxidized [2Fe-2S]-[ferredoxin] + H2O = (2E)-4-hydroxy-3-methylbut-2-enyl diphosphate + 2 reduced [2Fe-2S]-[ferredoxin] + 2 H(+). It catalyses the reaction dimethylallyl diphosphate + 2 oxidized [2Fe-2S]-[ferredoxin] + H2O = (2E)-4-hydroxy-3-methylbut-2-enyl diphosphate + 2 reduced [2Fe-2S]-[ferredoxin] + 2 H(+). It participates in isoprenoid biosynthesis; dimethylallyl diphosphate biosynthesis; dimethylallyl diphosphate from (2E)-4-hydroxy-3-methylbutenyl diphosphate: step 1/1. The protein operates within isoprenoid biosynthesis; isopentenyl diphosphate biosynthesis via DXP pathway; isopentenyl diphosphate from 1-deoxy-D-xylulose 5-phosphate: step 6/6. Functionally, catalyzes the conversion of 1-hydroxy-2-methyl-2-(E)-butenyl 4-diphosphate (HMBPP) into a mixture of isopentenyl diphosphate (IPP) and dimethylallyl diphosphate (DMAPP). Acts in the terminal step of the DOXP/MEP pathway for isoprenoid precursor biosynthesis. In Exiguobacterium sp. (strain ATCC BAA-1283 / AT1b), this protein is 4-hydroxy-3-methylbut-2-enyl diphosphate reductase.